Here is a 236-residue protein sequence, read N- to C-terminus: tRNA (guanine-N(1)-)-methyltransferase (236 aa).

Residues glycine 113 and isoleucine 133 to leucine 138 each bind S-adenosyl-L-methionine.

It belongs to the RNA methyltransferase TrmD family. Homodimer.

It is found in the cytoplasm. The enzyme catalyses guanosine(37) in tRNA + S-adenosyl-L-methionine = N(1)-methylguanosine(37) in tRNA + S-adenosyl-L-homocysteine + H(+). In terms of biological role, specifically methylates guanosine-37 in various tRNAs. The sequence is that of tRNA (guanine-N(1)-)-methyltransferase from Lachnospira eligens (strain ATCC 27750 / DSM 3376 / VPI C15-48 / C15-B4) (Eubacterium eligens).